Reading from the N-terminus, the 414-residue chain is MIOREX complex component 10 (414 aa).

A mitochondrion-targeting transit peptide spans 1–29 (MLSFRSLTSTFGFVSRFQIRRLGTSLSIQ). The Mitochondrial matrix portion of the chain corresponds to 30–373 (NLEVQDGRWK…ISLLNERNST (344 aa)). A helical membrane pass occupies residues 374-394 (FLEWIIIYLIAFELCFEIYHF). Residues 395 to 414 (YQKYSSYCSEPTNDDLDATK) lie on the Mitochondrial intermembrane side of the membrane.

Belongs to the RMD1/sif2 family. In terms of assembly, associates with the mitochondrial ribosome.

The protein resides in the mitochondrion inner membrane. Functionally, component of MIOREX complexes, large expressome-like assemblies of ribosomes with factors involved in all the steps of post-transcriptional gene expression. The polypeptide is MIOREX complex component 10 (Saccharomyces cerevisiae (strain ATCC 204508 / S288c) (Baker's yeast)).